The primary structure comprises 155 residues: Ribosome maturation factor RimP (155 aa).

This sequence belongs to the RimP family.

The protein resides in the cytoplasm. Functionally, required for maturation of 30S ribosomal subunits. This Listeria innocua serovar 6a (strain ATCC BAA-680 / CLIP 11262) protein is Ribosome maturation factor RimP.